The following is a 151-amino-acid chain: Viral interleukin-17 (151 aa).

A signal peptide spans 1–22; the sequence is MTFRKTSLVLLLLLSIDCIVKS. 3 N-linked (GlcNAc...) asparagine; by host glycosylation sites follow: Asn36, Asn53, and Asn64. Intrachain disulfides connect Cys90/Cys140 and Cys95/Cys142.

The protein belongs to the IL-17 family.

The protein resides in the secreted. The sequence is that of Viral interleukin-17 (13) from Saimiri sciureus (Common squirrel monkey).